Here is a 931-residue protein sequence, read N- to C-terminus: Up-regulator of cell proliferation (931 aa).

At serine 3 the chain carries Phosphoserine. Residues 689 to 929 (RSRLVVLSTV…NIQQLIELVR (241 aa)) form the VLIG-type G domain.

The protein belongs to the TRAFAC class dynamin-like GTPase superfamily. Very large inducible GTPase (VLIG) family. As to expression, strongly expressed in hepatitis B virus-infected liver and in HCC cells. Also highly expressed in well-differentiated gastric cancer tissues and various gastric cancer cell lines.

It is found in the cytoplasm. It localises to the nucleus. In terms of biological role, may be involved in cell cycle progression through the regulation of cyclin D1 expression. May participate in the development of hepatocellular carcinoma (HCC) by promoting hepatocellular growth and survival. May play an important role in development of gastric cancer. The chain is Up-regulator of cell proliferation (URGCP) from Homo sapiens (Human).